Consider the following 344-residue polypeptide: Dihydroorotate dehydrogenase (quinone) (344 aa).

FMN-binding positions include 65-69 (AGLDK) and T89. K69 contributes to the substrate binding site. Residue 114 to 118 (NRMGF) coordinates substrate. Residues N145 and N178 each contribute to the FMN site. Residue N178 coordinates substrate. S181 (nucleophile) is an active-site residue. N183 provides a ligand contact to substrate. K223 and T251 together coordinate FMN. 252–253 (NT) is a binding site for substrate. FMN is bound by residues G274, G303, and 324 to 325 (YT).

Belongs to the dihydroorotate dehydrogenase family. Type 2 subfamily. In terms of assembly, monomer. The cofactor is FMN.

Its subcellular location is the cell membrane. It carries out the reaction (S)-dihydroorotate + a quinone = orotate + a quinol. It participates in pyrimidine metabolism; UMP biosynthesis via de novo pathway; orotate from (S)-dihydroorotate (quinone route): step 1/1. Its function is as follows. Catalyzes the conversion of dihydroorotate to orotate with quinone as electron acceptor. In Ralstonia nicotianae (strain ATCC BAA-1114 / GMI1000) (Ralstonia solanacearum), this protein is Dihydroorotate dehydrogenase (quinone).